The chain runs to 270 residues: 4-hydroxy-tetrahydrodipicolinate reductase (270 aa).

Residues 8 to 13 (GALGRM), aspartate 34, 102 to 104 (GTT), and 128 to 131 (SQNY) each bind NAD(+). The active-site Proton donor/acceptor is histidine 160. Histidine 161 contacts (S)-2,3,4,5-tetrahydrodipicolinate. The Proton donor role is filled by lysine 164. A (S)-2,3,4,5-tetrahydrodipicolinate-binding site is contributed by 170 to 171 (GT).

The protein belongs to the DapB family.

The protein resides in the cytoplasm. It catalyses the reaction (S)-2,3,4,5-tetrahydrodipicolinate + NAD(+) + H2O = (2S,4S)-4-hydroxy-2,3,4,5-tetrahydrodipicolinate + NADH + H(+). The catalysed reaction is (S)-2,3,4,5-tetrahydrodipicolinate + NADP(+) + H2O = (2S,4S)-4-hydroxy-2,3,4,5-tetrahydrodipicolinate + NADPH + H(+). It participates in amino-acid biosynthesis; L-lysine biosynthesis via DAP pathway; (S)-tetrahydrodipicolinate from L-aspartate: step 4/4. In terms of biological role, catalyzes the conversion of 4-hydroxy-tetrahydrodipicolinate (HTPA) to tetrahydrodipicolinate. The protein is 4-hydroxy-tetrahydrodipicolinate reductase of Methanococcus maripaludis (strain C7 / ATCC BAA-1331).